A 126-amino-acid chain; its full sequence is Holo-[acyl-carrier-protein] synthase (126 aa).

Positions 8 and 56 each coordinate Mg(2+).

This sequence belongs to the P-Pant transferase superfamily. AcpS family. The cofactor is Mg(2+).

The protein resides in the cytoplasm. The enzyme catalyses apo-[ACP] + CoA = holo-[ACP] + adenosine 3',5'-bisphosphate + H(+). Functionally, transfers the 4'-phosphopantetheine moiety from coenzyme A to a Ser of acyl-carrier-protein. In Clostridium tetani (strain Massachusetts / E88), this protein is Holo-[acyl-carrier-protein] synthase.